The sequence spans 429 residues: Putative F-box/kelch-repeat protein At2g21680 (429 aa).

The tract at residues 1-32 (MVLISETSDDGSTGGDHQIKKPKKEEDRNKKL) is disordered. The span at 17-29 (HQIKKPKKEEDRN) shows a compositional bias: basic and acidic residues. One can recognise an F-box domain in the interval 37–84 (QVSLPIPEELILRCFLLVRRCHHPSLSLVCRSFHSLMSKLYDDRLRLG). Kelch repeat units follow at residues 144–175 (DIYV…RRGE), 176–221 (TSIR…VIDG), 222–267 (KIYV…LTYA), 269–313 (MKEK…VVDN), and 315–359 (LFCI…DGYK).

The polypeptide is Putative F-box/kelch-repeat protein At2g21680 (Arabidopsis thaliana (Mouse-ear cress)).